The sequence spans 448 residues: Chromosomal replication initiator protein DnaA (448 aa).

The tract at residues 1-93 (MEQIVSSLWS…KPTEQNLSAS (93 aa)) is domain I, interacts with DnaA modulators. Positions 94–110 (STNKEELTQDTVHKFKT) are domain II. The interval 111-328 (GLNGRLTFDN…GAINRVSAWC (218 aa)) is domain III, AAA+ region. Positions 156, 158, 159, and 160 each coordinate ATP. A domain IV, binds dsDNA region spans residues 329-448 (NFTKRQITID…YTNLTRKLSS (120 aa)).

Belongs to the DnaA family. Oligomerizes as a right-handed, spiral filament on DNA at oriC.

It is found in the cytoplasm. Its function is as follows. Plays an essential role in the initiation and regulation of chromosomal replication. ATP-DnaA binds to the origin of replication (oriC) to initiate formation of the DNA replication initiation complex once per cell cycle. Binds the DnaA box (a 9 base pair repeat at the origin) and separates the double-stranded (ds)DNA. Forms a right-handed helical filament on oriC DNA; dsDNA binds to the exterior of the filament while single-stranded (ss)DNA is stabiized in the filament's interior. The ATP-DnaA-oriC complex binds and stabilizes one strand of the AT-rich DNA unwinding element (DUE), permitting loading of DNA polymerase. After initiation quickly degrades to an ADP-DnaA complex that is not apt for DNA replication. Binds acidic phospholipids. This Haemophilus ducreyi (strain 35000HP / ATCC 700724) protein is Chromosomal replication initiator protein DnaA.